The sequence spans 620 residues: MYND-type zinc finger protein MUB1 (620 aa).

Residues 514–555 (NFSCGKWEDFPRQFAKCRRCKRTKYCSRKCQLKAWGYHRYWC) form an MYND-type; degenerate zinc finger. Residues Cys-530, Cys-533, His-551, and Cys-555 each coordinate Zn(2+). Residues 563-606 (MRSTNTTTGVNTPNEPSSLNATATTAADVSNSTSTFTPNISTTV) are compositionally biased toward polar residues. Positions 563–620 (MRSTNTTTGVNTPNEPSSLNATATTAADVSNSTSTFTPNISTTVPDEISNRDENSIPE) are disordered. Basic and acidic residues predominate over residues 610–620 (ISNRDENSIPE).

Belongs to the MUB1/samB family. In terms of assembly, interacts with UBR2 and RPN4.

It localises to the cytoplasm. Involved in the determination of the onset of polarized growth. Required for the ubiquitin-dependent degradation of RPN4. Cooperates with UBR2 to transfer ubiquitin from RAD6 to RPN4. In Saccharomyces cerevisiae (strain ATCC 204508 / S288c) (Baker's yeast), this protein is MYND-type zinc finger protein MUB1 (MUB1).